The primary structure comprises 899 residues: Bifunctional uridylyltransferase/uridylyl-removing enzyme (899 aa).

The tract at residues Met-1 to Pro-342 is uridylyltransferase. Positions Leu-343–Thr-705 are uridylyl-removing. Residues Val-461–Leu-583 form the HD domain. ACT domains follow at residues Gln-706–Arg-789 and Ile-816–Ile-899.

The protein belongs to the GlnD family. It depends on Mg(2+) as a cofactor.

It catalyses the reaction [protein-PII]-L-tyrosine + UTP = [protein-PII]-uridylyl-L-tyrosine + diphosphate. The enzyme catalyses [protein-PII]-uridylyl-L-tyrosine + H2O = [protein-PII]-L-tyrosine + UMP + H(+). With respect to regulation, uridylyltransferase (UTase) activity is inhibited by glutamine, while glutamine activates uridylyl-removing (UR) activity. Its function is as follows. Modifies, by uridylylation and deuridylylation, the PII regulatory proteins (GlnB and homologs), in response to the nitrogen status of the cell that GlnD senses through the glutamine level. Under low glutamine levels, catalyzes the conversion of the PII proteins and UTP to PII-UMP and PPi, while under higher glutamine levels, GlnD hydrolyzes PII-UMP to PII and UMP (deuridylylation). Thus, controls uridylylation state and activity of the PII proteins, and plays an important role in the regulation of nitrogen fixation and metabolism. The chain is Bifunctional uridylyltransferase/uridylyl-removing enzyme from Azotobacter vinelandii (strain DJ / ATCC BAA-1303).